The following is a 227-amino-acid chain: Rho-related GTP-binding protein RhoN (227 aa).

14–21 contributes to the GTP binding site; it reads GDAECGKT. The Effector region signature appears at 36–44; sequence YVPTVFENY. GTP contacts are provided by residues 61–65 and 119–122; these read DTSGS and CKLD. Positions 186 to 227 are disordered; that stretch reads HRQLRRTDSRRGLQRSTQLSGRPDRGNEGEMHKDRAKSCNLM. The span at 207-227 shows a compositional bias: basic and acidic residues; the sequence is RPDRGNEGEMHKDRAKSCNLM. Position 224 is a cysteine methyl ester (Cys-224). The S-geranylgeranyl cysteine moiety is linked to residue Cys-224. A propeptide spans 225–227 (removed in mature form); the sequence is NLM.

Belongs to the small GTPase superfamily. Rho family. As to quaternary structure, interacts with the Rho-GAP domain of RACGAP1. Interacts with UBXD5. Interacts with PRAG1. In terms of tissue distribution, expressed specifically in neurons in the brain and spinal cord and also in hepatic stellate cells.

It localises to the cytoplasmic vesicle. It is found in the secretory vesicle. The protein resides in the acrosome membrane. Functionally, may be specifically involved in neuronal and hepatic functions. Is a C3 toxin-insensitive member of the Rho subfamily. In Mus musculus (Mouse), this protein is Rho-related GTP-binding protein RhoN (Rnd2).